The sequence spans 38 residues: Cytochrome b6-f complex subunit 5 (38 aa).

A helical membrane pass occupies residues 5–25; that stretch reads LLCGIVLGLIPVTLLGLFVDA.

It belongs to the PetG family. As to quaternary structure, the 4 large subunits of the cytochrome b6-f complex are cytochrome b6, subunit IV (17 kDa polypeptide, PetD), cytochrome f and the Rieske protein, while the 4 small subunits are PetG, PetL, PetM and PetN. The complex functions as a dimer.

The protein localises to the cellular thylakoid membrane. Component of the cytochrome b6-f complex, which mediates electron transfer between photosystem II (PSII) and photosystem I (PSI), cyclic electron flow around PSI, and state transitions. PetG is required for either the stability or assembly of the cytochrome b6-f complex. This is Cytochrome b6-f complex subunit 5 from Prochlorococcus marinus (strain MIT 9313).